The sequence spans 148 residues: Snaclec alboaggregin-D subunit beta (148 aa).

The N-terminal stretch at 1-23 (MGRFISVSFGLLVVFLSLSGAGA) is a signal peptide. Cys-27 and Cys-38 are joined by a disulfide. The 112-residue stretch at 34-145 (YDLYCYKVFK…CNSTYSFVCK (112 aa)) folds into the C-type lectin domain. An N-linked (GlcNAc...) asparagine glycan is attached at Asn-47. Disulfide bonds link Cys-55-Cys-144 and Cys-121-Cys-136. N-linked (GlcNAc...) asparagine glycosylation is present at Asn-137.

Tetramer of heterodimers of alpha and beta subunits (alphabeta)(4); disulfide-linked. Expressed by the venom gland.

The protein localises to the secreted. Functionally, snaclec that induces human platelet aggregation in the absence of any cofactor with the EC(50) of 0.25 nM and causes tyrosine phosphorylation in human platelets. Antibodies against either platelet GPIbalpha (GP1BA) or GPVI (GP6) inhibit alboaggregin D-induced platelet aggregation. Only the combination of these two antibodies completely inhibit aggregation, suggesting that it acts through both GPIbalpha (GP1BA) and GPVI (GP6). This is Snaclec alboaggregin-D subunit beta from Trimeresurus albolabris (White-lipped pit viper).